Reading from the N-terminus, the 729-residue chain is Catalase-peroxidase (729 aa).

A disordered region spans residues 1–26; it reads MTMDQKTDNAGKCPVAHTAPRGRSNR. Residues 97–219 constitute a cross-link (tryptophyl-tyrosyl-methioninium (Trp-Tyr) (with M-245)); the sequence is WHSAGTYRIT…LAAVQMGLIY (123 aa). The active-site Proton acceptor is the His98. The segment at residues 219-245 is a cross-link (tryptophyl-tyrosyl-methioninium (Tyr-Met) (with W-97)); it reads YVNPEGPNGNPDPVAAAHDIRETFARM. His260 contributes to the heme b binding site.

The protein belongs to the peroxidase family. Peroxidase/catalase subfamily. In terms of assembly, homodimer or homotetramer. The cofactor is heme b. Formation of the three residue Trp-Tyr-Met cross-link is important for the catalase, but not the peroxidase activity of the enzyme.

It catalyses the reaction H2O2 + AH2 = A + 2 H2O. The enzyme catalyses 2 H2O2 = O2 + 2 H2O. In terms of biological role, bifunctional enzyme with both catalase and broad-spectrum peroxidase activity. The polypeptide is Catalase-peroxidase (Sinorhizobium medicae (strain WSM419) (Ensifer medicae)).